A 302-amino-acid polypeptide reads, in one-letter code: HTH-type transcriptional regulator AbgR (302 aa).

One can recognise an HTH lysR-type domain in the interval 5–62 (VKIHQIRAFVEVARQGSIRGASRMLNMSQPALSKSIQELEEGLAAQLFFRRSKGVTLT). A DNA-binding region (H-T-H motif) is located at residues 22 to 41 (IRGASRMLNMSQPALSKSIQ).

The protein belongs to the LysR transcriptional regulatory family.

Could be the regulator of the abg operon. The protein is HTH-type transcriptional regulator AbgR (abgR) of Escherichia coli (strain K12).